A 401-amino-acid polypeptide reads, in one-letter code: Anhydro-N-acetylmuramic acid kinase (401 aa).

25 to 32 lines the ATP pocket; the sequence is GTSLDGLD.

It belongs to the anhydro-N-acetylmuramic acid kinase family.

It catalyses the reaction 1,6-anhydro-N-acetyl-beta-muramate + ATP + H2O = N-acetyl-D-muramate 6-phosphate + ADP + H(+). The protein operates within amino-sugar metabolism; 1,6-anhydro-N-acetylmuramate degradation. It participates in cell wall biogenesis; peptidoglycan recycling. Functionally, catalyzes the specific phosphorylation of 1,6-anhydro-N-acetylmuramic acid (anhMurNAc) with the simultaneous cleavage of the 1,6-anhydro ring, generating MurNAc-6-P. Is required for the utilization of anhMurNAc either imported from the medium or derived from its own cell wall murein, and thus plays a role in cell wall recycling. The protein is Anhydro-N-acetylmuramic acid kinase of Pseudoalteromonas translucida (strain TAC 125).